The sequence spans 330 residues: MANNTPFAAQPLLTSSELPLTLISLDDWALVTLTGADRVKYLQGQVTADIDALPTDQHVLCAHCDAKGKMWSNLRLFYRGEGLAFIERRSVLDNQLSELKKYAVFSKVVIAAQPDAVLLGVAGTQAKAVLAEVFAELPNADHPVVQQGDSTLLYFSLPAERFLLVTDTEQAQQLVEKLADRAQFNNSKQWLALDIEAGFPIIDTDSSAQFIPQATNIQALNGISFSKGCYTGQEMVARAKYRGANKRALYWLAGSANRAPAVGEDLEWQLGENWRRTGSVLAAITLSDGTVWVQAVLNNDLAADSVLRVRDDAESVLTIQPLPYSLTEDK.

Folate is bound by residues Trp28 and Trp190.

This sequence belongs to the tRNA-modifying YgfZ family.

The protein resides in the cytoplasm. Folate-binding protein involved in regulating the level of ATP-DnaA and in the modification of some tRNAs. It is probably a key factor in regulatory networks that act via tRNA modification, such as initiation of chromosomal replication. This is tRNA-modifying protein YgfZ from Yersinia enterocolitica serotype O:8 / biotype 1B (strain NCTC 13174 / 8081).